The sequence spans 562 residues: Protein TBF1 (562 aa).

The interval 376–414 is disordered; sequence ASMSNSSSGPHSSHNNSSNSNNNGSIGLRKPKAKRTWSK. The span at 377-400 shows a compositional bias: low complexity; the sequence is SMSNSSSGPHSSHNNSSNSNNNGS. The HTH myb-type domain occupies 404 to 460; it reads RKPKAKRTWSKEEEEALVEGLKEVGPSWSKILDLYGPGGKITENLKNRTQVQLKDKA. A DNA-binding region (H-T-H motif) is located at residues 431-456; sequence WSKILDLYGPGGKITENLKNRTQVQL. Positions 495–562 are disordered; that stretch reads FSQSPNSSTI…GFDPHLEDGM (68 aa). Polar residues-rich tracts occupy residues 496-522 and 532-552; these read SQSPNSSTIMEQNLSQHPSSAASATED and GQNSDNMPSNGLFGNSTSDNT.

In terms of assembly, homodimer.

The protein localises to the nucleus. It is found in the chromosome. It localises to the telomere. Functionally, binds the telomeric double-stranded TTAGGG repeat and negatively regulates telomere length. Involved in the regulation of gene expression. 52 binding sites have been identified, distributed over 15 chromosomes. A member of the general regulatory factors (GRFs) which act as genome partitioners. Acts as a chromatin insulator which are known as STARs (Subtelomeric anti-silencing region). STARs prevent negative or positive transcription influence by extending across chromatin to a promoter. The sequence is that of Protein TBF1 (TBF1) from Saccharomyces cerevisiae (strain ATCC 204508 / S288c) (Baker's yeast).